Here is a 215-residue protein sequence, read N- to C-terminus: ATP-dependent Clp protease proteolytic subunit (215 aa).

The active-site Nucleophile is S115. H140 is an active-site residue.

It belongs to the peptidase S14 family. As to quaternary structure, fourteen ClpP subunits assemble into 2 heptameric rings which stack back to back to give a disk-like structure with a central cavity, resembling the structure of eukaryotic proteasomes.

The protein resides in the cytoplasm. The enzyme catalyses Hydrolysis of proteins to small peptides in the presence of ATP and magnesium. alpha-casein is the usual test substrate. In the absence of ATP, only oligopeptides shorter than five residues are hydrolyzed (such as succinyl-Leu-Tyr-|-NHMec, and Leu-Tyr-Leu-|-Tyr-Trp, in which cleavage of the -Tyr-|-Leu- and -Tyr-|-Trp bonds also occurs).. Its function is as follows. Cleaves peptides in various proteins in a process that requires ATP hydrolysis. Has a chymotrypsin-like activity. Plays a major role in the degradation of misfolded proteins. The protein is ATP-dependent Clp protease proteolytic subunit of Anaplasma marginale (strain Florida).